We begin with the raw amino-acid sequence, 94 residues long: DNA-directed RNA polymerase subunit omega (94 aa).

It belongs to the RNA polymerase subunit omega family. In terms of assembly, the RNAP catalytic core consists of 2 alpha, 1 beta, 1 beta' and 1 omega subunit. When a sigma factor is associated with the core the holoenzyme is formed, which can initiate transcription.

The catalysed reaction is RNA(n) + a ribonucleoside 5'-triphosphate = RNA(n+1) + diphosphate. Functionally, promotes RNA polymerase assembly. Latches the N- and C-terminal regions of the beta' subunit thereby facilitating its interaction with the beta and alpha subunits. In Bifidobacterium longum (strain DJO10A), this protein is DNA-directed RNA polymerase subunit omega.